We begin with the raw amino-acid sequence, 394 residues long: 3-dehydroquinate synthase (394 aa).

NAD(+) contacts are provided by residues glycine 112–aspartate 116, threonine 136–threonine 137, lysine 149, lysine 158, and threonine 176–threonine 179. Zn(2+) contacts are provided by glutamate 191, histidine 254, and histidine 276. The segment covering serine 371 to proline 388 has biased composition (polar residues). Residues serine 371–histidine 394 are disordered.

The protein belongs to the sugar phosphate cyclases superfamily. Dehydroquinate synthase family. The cofactor is NAD(+). Co(2+) serves as cofactor. Zn(2+) is required as a cofactor.

The protein localises to the cytoplasm. It carries out the reaction 7-phospho-2-dehydro-3-deoxy-D-arabino-heptonate = 3-dehydroquinate + phosphate. Its pathway is metabolic intermediate biosynthesis; chorismate biosynthesis; chorismate from D-erythrose 4-phosphate and phosphoenolpyruvate: step 2/7. Its function is as follows. Catalyzes the conversion of 3-deoxy-D-arabino-heptulosonate 7-phosphate (DAHP) to dehydroquinate (DHQ). The chain is 3-dehydroquinate synthase from Xylella fastidiosa (strain 9a5c).